We begin with the raw amino-acid sequence, 360 residues long: Transcriptional coactivator MYCFIDRAFT_190109 (360 aa).

Residues 3–67 (GMALNQLLAC…GFLHEPRPGQ (65 aa)) enclose the HTH iclR-type domain. Residues 33–52 (ARDVADLTGVPETQLCRVVR) constitute a DNA-binding region (H-T-H motif).

The protein localises to the nucleus. Transcriptional coactivator; part of the gene cluster that mediates the biosynthesis of an emodin derivative that may be involved in black Sigatoka disease of banana. With MYCFIDRAFT_198930, coregulates the production of the PKS8-1 cluster product. This Pseudocercospora fijiensis (strain CIRAD86) (Black leaf streak disease fungus) protein is Transcriptional coactivator MYCFIDRAFT_190109.